We begin with the raw amino-acid sequence, 162 residues long: Small ribosomal subunit protein uS12m (162 aa).

The N-terminal 37 residues, 1–37 (MIRFAQYARYPVISRLMKPTVISPFQAQAFSSSSVML), are a transit peptide targeting the mitochondrion.

It belongs to the universal ribosomal protein uS12 family. Component of the mitochondrial small ribosomal subunit (mt-SSU). Mature yeast 74S mitochondrial ribosomes consist of a small (37S) and a large (54S) subunit. The 37S small subunit contains a 15S ribosomal RNA (15S mt-rRNA) and at least 32 different proteins. The 54S large subunit contains a 21S rRNA (21S mt-rRNA) and at least 45 different proteins. uS12m forms part of the decoding center of the mt-SSU.

It localises to the mitochondrion. Component of the mitochondrial ribosome (mitoribosome), a dedicated translation machinery responsible for the synthesis of mitochondrial genome-encoded proteins, including at least some of the essential transmembrane subunits of the mitochondrial respiratory chain. The mitoribosomes are attached to the mitochondrial inner membrane and translation products are cotranslationally integrated into the membrane. uS12m is required for respiratory growth. This is Small ribosomal subunit protein uS12m from Schizosaccharomyces pombe (strain 972 / ATCC 24843) (Fission yeast).